Consider the following 440-residue polypeptide: UDP-N-acetylmuramoylalanine--D-glutamate ligase (440 aa).

Residue Gly115–Thr121 participates in ATP binding.

It belongs to the MurCDEF family.

Its subcellular location is the cytoplasm. The enzyme catalyses UDP-N-acetyl-alpha-D-muramoyl-L-alanine + D-glutamate + ATP = UDP-N-acetyl-alpha-D-muramoyl-L-alanyl-D-glutamate + ADP + phosphate + H(+). Its pathway is cell wall biogenesis; peptidoglycan biosynthesis. Its function is as follows. Cell wall formation. Catalyzes the addition of glutamate to the nucleotide precursor UDP-N-acetylmuramoyl-L-alanine (UMA). This Aliivibrio fischeri (strain ATCC 700601 / ES114) (Vibrio fischeri) protein is UDP-N-acetylmuramoylalanine--D-glutamate ligase.